The primary structure comprises 518 residues: MVSDFGLPTFISATELLLASAVFCLVFWVAGASKPRVPKGLKRLPGPWGWPLLGHVLTLGKNPHVALARLSRRYGDVFQIRLGSTPVVVLSGLDTIKQALVRQGDDFKGRPDLYSFSFVTKGQSMIFGSDSGPVWAARRRLAQNALNSFSVASDPASSSSCYLEEHVSQEAENLISKFQELMAAVGHFDPYRYVVMSVANVICAMCFGRRYDHDDQELLSLVNLNDEFGKVAASGSPADFFLILRYLPNPALDTFKDLNERFYSFTQERVKEHCRSFEKGHIRDITDSLIKHYRVDRLDENANVQVSDEKTVGIVLDLFGAGFDTVTTAISWSLMYLVTKPRIQRKIQEELDAVVGRARRPRFSDRPQLPYLEAVIMETFRHTSFLPFTIPHSTTRDTSLGGFYIPKGRCVFVNQWQNNHDPELWGDPEAFRPERFLTPSGAVDKALTEKVLLFGLGKRKCIGETIGRLEVFLFLATLLQQVEFSVSPGTTVDMTPIYGLTMKHARCEHFQAKLRFEA.

Residues 33-44 are mitochondrial targeting signal; the sequence is SKPRVPKGLKRL. Serine 71 carries O-linked (GlcNAc) serine glycosylation. Substrate is bound at residue phenylalanine 228. A heme-binding site is contributed by cysteine 461.

This sequence belongs to the cytochrome P450 family. As to quaternary structure, interacts with cytosolic chaperones HSP70 and HSP90; this interaction is required for initial targeting to mitochondria. Interacts (via mitochondrial targeting signal) with TOMM40 (via N-terminus); this interaction is required for translocation across the mitochondrial outer membrane. Heme is required as a cofactor.

The protein resides in the endoplasmic reticulum membrane. Its subcellular location is the mitochondrion inner membrane. It is found in the microsome membrane. The protein localises to the cytoplasm. It catalyses the reaction an organic molecule + reduced [NADPH--hemoprotein reductase] + O2 = an alcohol + oxidized [NADPH--hemoprotein reductase] + H2O + H(+). The catalysed reaction is estrone + reduced [NADPH--hemoprotein reductase] + O2 = 2-hydroxyestrone + oxidized [NADPH--hemoprotein reductase] + H2O + H(+). It carries out the reaction estrone + reduced [NADPH--hemoprotein reductase] + O2 = 4-hydroxyestrone + oxidized [NADPH--hemoprotein reductase] + H2O + H(+). The enzyme catalyses estrone + reduced [NADPH--hemoprotein reductase] + O2 = 6alpha-hydroxyestrone + oxidized [NADPH--hemoprotein reductase] + H2O + H(+). It catalyses the reaction estrone + reduced [NADPH--hemoprotein reductase] + O2 = 15alpha-hydroxyestrone + oxidized [NADPH--hemoprotein reductase] + H2O + H(+). The catalysed reaction is estrone + reduced [NADPH--hemoprotein reductase] + O2 = 16alpha-hydroxyestrone + oxidized [NADPH--hemoprotein reductase] + H2O + H(+). It carries out the reaction 17beta-estradiol + reduced [NADPH--hemoprotein reductase] + O2 = 2-hydroxy-17beta-estradiol + oxidized [NADPH--hemoprotein reductase] + H2O + H(+). The enzyme catalyses 17beta-estradiol + reduced [NADPH--hemoprotein reductase] + O2 = 4-hydroxy-17beta-estradiol + oxidized [NADPH--hemoprotein reductase] + H2O + H(+). It catalyses the reaction 17beta-estradiol + reduced [NADPH--hemoprotein reductase] + O2 = 6alpha-hydroxy-17beta-estradiol + oxidized [NADPH--hemoprotein reductase] + H2O + H(+). The catalysed reaction is 17beta-estradiol + reduced [NADPH--hemoprotein reductase] + O2 = 7alpha-hydroxy-17beta-estradiol + oxidized [NADPH--hemoprotein reductase] + H2O + H(+). It carries out the reaction 17beta-estradiol + reduced [NADPH--hemoprotein reductase] + O2 = 15alpha-hydroxy-17beta-estradiol + oxidized [NADPH--hemoprotein reductase] + H2O + H(+). The enzyme catalyses (5Z,8Z,11Z)-eicosatrienoate + reduced [NADPH--hemoprotein reductase] + O2 = 19-hydroxy-(5Z,8Z,11Z)-eicosatrienoate + oxidized [NADPH--hemoprotein reductase] + H2O + H(+). It catalyses the reaction (5Z,8Z,11Z,14Z)-eicosatetraenoate + reduced [NADPH--hemoprotein reductase] + O2 = 16-hydroxy-(5Z,8Z,11Z,14Z)-eicosatetraenoate + oxidized [NADPH--hemoprotein reductase] + H2O + H(+). The catalysed reaction is (5Z,8Z,11Z,14Z)-eicosatetraenoate + reduced [NADPH--hemoprotein reductase] + O2 = 17-hydroxy-(5Z,8Z,11Z,14Z)-eicosatetraenoate + oxidized [NADPH--hemoprotein reductase] + H2O + H(+). It carries out the reaction (5Z,8Z,11Z,14Z)-eicosatetraenoate + reduced [NADPH--hemoprotein reductase] + O2 = 18-hydroxy-(5Z,8Z,11Z,14Z)-eicosatetraenoate + oxidized [NADPH--hemoprotein reductase] + H2O + H(+). The enzyme catalyses (5Z,8Z,11Z,14Z)-eicosatetraenoate + reduced [NADPH--hemoprotein reductase] + O2 = 19-hydroxy-(5Z,8Z,11Z,14Z)-eicosatetraenoate + oxidized [NADPH--hemoprotein reductase] + H2O + H(+). It catalyses the reaction (5Z,8Z,11Z,14Z,17Z)-eicosapentaenoate + reduced [NADPH--hemoprotein reductase] + O2 = 19-hydroxy-(5Z,8Z,11Z,14Z,17Z)-eicosapentaenoate + oxidized [NADPH--hemoprotein reductase] + H2O + H(+). The catalysed reaction is (5Z,8Z,11Z,14Z)-eicosatetraenoate + reduced [NADPH--hemoprotein reductase] + O2 = (8R,9S)-epoxy-(5Z,11Z,14Z)-eicosatrienoate + oxidized [NADPH--hemoprotein reductase] + H2O + H(+). It carries out the reaction (5Z,8Z,11Z,14Z)-eicosatetraenoate + reduced [NADPH--hemoprotein reductase] + O2 = (11R,12S)-epoxy-(5Z,8Z,14Z)-eicosatrienoate + oxidized [NADPH--hemoprotein reductase] + H2O + H(+). The enzyme catalyses (5Z,8Z,11Z,14Z)-eicosatetraenoate + reduced [NADPH--hemoprotein reductase] + O2 = (14S,15R)-epoxy-(5Z,8Z,11Z)-eicosatrienoate + oxidized [NADPH--hemoprotein reductase] + H2O + H(+). It catalyses the reaction (5Z,8Z,11Z,14Z)-eicosatetraenoate + reduced [NADPH--hemoprotein reductase] + O2 = (14R,15S)-epoxy-(5Z,8Z,11Z)-eicosatrienoate + oxidized [NADPH--hemoprotein reductase] + H2O + H(+). The catalysed reaction is (5Z,8Z,11Z,14Z,17Z)-eicosapentaenoate + reduced [NADPH--hemoprotein reductase] + O2 = (17R,18S)-epoxy-(5Z,8Z,11Z,14Z)-eicosatetraenoate + oxidized [NADPH--hemoprotein reductase] + H2O + H(+). It carries out the reaction (4Z,7Z,10Z,13Z,16Z,19Z)-docosahexaenoate + reduced [NADPH--hemoprotein reductase] + O2 = (19S,20R)-epoxy-(4Z,7Z,10Z,13Z,16Z)-docosapentaenoate + oxidized [NADPH--hemoprotein reductase] + H2O + H(+). The enzyme catalyses (4Z,7Z,10Z,13Z,16Z,19Z)-docosahexaenoate + reduced [NADPH--hemoprotein reductase] + O2 = (19R,20S)-epoxy-(4Z,7Z,10Z,13Z,16Z)-docosapentaenoate + oxidized [NADPH--hemoprotein reductase] + H2O + H(+). It catalyses the reaction all-trans-retinol + reduced [NADPH--hemoprotein reductase] + O2 = all-trans-retinal + oxidized [NADPH--hemoprotein reductase] + 2 H2O + H(+). The catalysed reaction is all-trans-retinal + reduced [NADPH--hemoprotein reductase] + O2 = all-trans-retinoate + oxidized [NADPH--hemoprotein reductase] + H2O + 2 H(+). It carries out the reaction (13S)-hydroperoxy-(9Z,11E)-octadecadienoate = 13-oxo-(9Z,11E)-octadecadienoate + H2O. The enzyme catalyses (12S)-hydroperoxy-(5Z,8Z,10E,14Z)-eicosatetraenoate = 12-oxo-(5Z,8Z,10E,14Z)-eicosatetraenoate + H2O. It catalyses the reaction (15S)-hydroperoxy-(5Z,8Z,11Z,13E)-eicosatetraenoate = 15-oxo-(5Z,8Z,11Z,13E)-eicosatetraenoate + H2O. The catalysed reaction is (5S)-hydroperoxy-(6E,8Z,11Z,14Z)-eicosatetraenoate = 5-oxo-(6E,8Z,11Z,14Z)-eicosatetraenoate + H2O. It functions in the pathway steroid hormone biosynthesis. The protein operates within lipid metabolism; fatty acid metabolism. It participates in cofactor metabolism; retinol metabolism. Its function is as follows. A cytochrome P450 monooxygenase involved in the metabolism of various endogenous substrates, including fatty acids, steroid hormones and vitamins. Mechanistically, uses molecular oxygen inserting one oxygen atom into a substrate, and reducing the second into a water molecule, with two electrons provided by NADPH via cytochrome P450 reductase (CPR; NADPH-ferrihemoprotein reductase). Catalyzes the hydroxylation of carbon-hydrogen bonds. Exhibits high catalytic activity for the formation of hydroxyestrogens from estrone (E1) and 17beta-estradiol (E2), namely 2-hydroxy E1 and E2, as well as D-ring hydroxylated E1 and E2 at the C15alpha and C16alpha positions. Displays different regioselectivities for polyunsaturated fatty acids (PUFA) hydroxylation. Catalyzes the epoxidation of double bonds of certain PUFA. Converts arachidonic acid toward epoxyeicosatrienoic acid (EET) regioisomers, 8,9-, 11,12-, and 14,15-EET, that function as lipid mediators in the vascular system. Displays an absolute stereoselectivity in the epoxidation of eicosapentaenoic acid (EPA) producing the 17(R),18(S) enantiomer. May play an important role in all-trans retinoic acid biosynthesis in extrahepatic tissues. Catalyzes two successive oxidative transformation of all-trans retinol to all-trans retinal and then to the active form all-trans retinoic acid. May also participate in eicosanoids metabolism by converting hydroperoxide species into oxo metabolites (lipoxygenase-like reaction, NADPH-independent). This is Cytochrome P450 1A1 (CYP1A1) from Oryctolagus cuniculus (Rabbit).